Here is a 118-residue protein sequence, read N- to C-terminus: Beta-2-microglobulin (118 aa).

An N-terminal signal peptide occupies residues 1 to 20 (MARVVALVLLGLLSLTGLEA). The region spanning 22–115 (PRVPKVQVYS…LKDPLIVKWD (94 aa)) is the Ig-like C1-type domain. The cysteines at positions 45 and 99 are disulfide-linked.

This sequence belongs to the beta-2-microglobulin family. In terms of assembly, heterodimer of an alpha chain and a beta chain. Beta-2-microglobulin is the beta-chain of major histocompatibility complex class I molecules.

It is found in the secreted. Functionally, component of the class I major histocompatibility complex (MHC). Involved in the presentation of peptide antigens to the immune system. This chain is Beta-2-microglobulin (B2M), found in Equus caballus (Horse).